A 180-amino-acid polypeptide reads, in one-letter code: Crossover junction endodeoxyribonuclease RuvC (180 aa).

Residues Asp7, Glu66, and Asp138 contribute to the active site. The Mg(2+) site is built by Asp7, Glu66, and Asp138.

It belongs to the RuvC family. In terms of assembly, homodimer which binds Holliday junction (HJ) DNA. The HJ becomes 2-fold symmetrical on binding to RuvC with unstacked arms; it has a different conformation from HJ DNA in complex with RuvA. In the full resolvosome a probable DNA-RuvA(4)-RuvB(12)-RuvC(2) complex forms which resolves the HJ. It depends on Mg(2+) as a cofactor.

It localises to the cytoplasm. It carries out the reaction Endonucleolytic cleavage at a junction such as a reciprocal single-stranded crossover between two homologous DNA duplexes (Holliday junction).. Its function is as follows. The RuvA-RuvB-RuvC complex processes Holliday junction (HJ) DNA during genetic recombination and DNA repair. Endonuclease that resolves HJ intermediates. Cleaves cruciform DNA by making single-stranded nicks across the HJ at symmetrical positions within the homologous arms, yielding a 5'-phosphate and a 3'-hydroxyl group; requires a central core of homology in the junction. The consensus cleavage sequence is 5'-(A/T)TT(C/G)-3'. Cleavage occurs on the 3'-side of the TT dinucleotide at the point of strand exchange. HJ branch migration catalyzed by RuvA-RuvB allows RuvC to scan DNA until it finds its consensus sequence, where it cleaves and resolves the cruciform DNA. The protein is Crossover junction endodeoxyribonuclease RuvC of Paraburkholderia xenovorans (strain LB400).